A 61-amino-acid polypeptide reads, in one-letter code: Conotoxin TeAr154 (61 aa).

Residues 1-19 (MHCLPVFVILLLLTASGLS) form the signal peptide. A propeptide spanning residues 20-47 (VDARPKTEDDVPLSSFRDNTKSTLQRLL) is cleaved from the precursor. E57 is modified (4-carboxyglutamate).

Post-translationally, contains 2 disulfide bonds that can be either 'C1-C3, C2-C4' or 'C1-C4, C2-C3', since these disulfide connectivities have been observed for conotoxins with cysteine framework V (for examples, see AC P0DQQ7 and AC P81755). In terms of processing, contains 2 disulfide bonds. In terms of tissue distribution, expressed by the venom duct.

Its subcellular location is the secreted. The protein is Conotoxin TeAr154 of Conus textile (Cloth-of-gold cone).